We begin with the raw amino-acid sequence, 209 residues long: MKPQSLEANIINPITPLEVTQELSDNVILTALDDLYDWVKMSSLYPFMFGTACCFMEFMGAYASRFDMERFGMIPRATPRQADLLITAGTITMKYAPALVRLYEQMPEPKYVMAMGACTITGGMFSADSPSAVRGVDKLIPVDVYIPGCPPRAEAVLDAITKLRKKIANESLQERDTTQQTHRYYSIPHKMKVVPPAVTGQYLQSHEVA.

Cysteine 53, cysteine 54, cysteine 118, and cysteine 149 together coordinate [4Fe-4S] cluster.

The protein belongs to the complex I 20 kDa subunit family. In terms of assembly, NDH-1 can be composed of about 15 different subunits; different subcomplexes with different compositions have been identified which probably have different functions. Requires [4Fe-4S] cluster as cofactor.

The protein localises to the cellular thylakoid membrane. It catalyses the reaction a plastoquinone + NADH + (n+1) H(+)(in) = a plastoquinol + NAD(+) + n H(+)(out). It carries out the reaction a plastoquinone + NADPH + (n+1) H(+)(in) = a plastoquinol + NADP(+) + n H(+)(out). Functionally, NDH-1 shuttles electrons from an unknown electron donor, via FMN and iron-sulfur (Fe-S) centers, to quinones in the respiratory and/or the photosynthetic chain. The immediate electron acceptor for the enzyme in this species is believed to be plastoquinone. Couples the redox reaction to proton translocation, and thus conserves the redox energy in a proton gradient. Cyanobacterial NDH-1 also plays a role in inorganic carbon-concentration. The protein is NAD(P)H-quinone oxidoreductase subunit K 2 of Acaryochloris marina (strain MBIC 11017).